We begin with the raw amino-acid sequence, 428 residues long: 3-phosphoshikimate 1-carboxyvinyltransferase (428 aa).

3 residues coordinate 3-phosphoshikimate: Lys21, Ser22, and Arg26. Lys21 provides a ligand contact to phosphoenolpyruvate. Gly91 and Arg119 together coordinate phosphoenolpyruvate. 3-phosphoshikimate-binding residues include Ser164, Gln166, Asp313, and Lys340. Gln166 serves as a coordination point for phosphoenolpyruvate. The active-site Proton acceptor is Asp313. Positions 344 and 386 each coordinate phosphoenolpyruvate.

Belongs to the EPSP synthase family. In terms of assembly, monomer.

Its subcellular location is the cytoplasm. It carries out the reaction 3-phosphoshikimate + phosphoenolpyruvate = 5-O-(1-carboxyvinyl)-3-phosphoshikimate + phosphate. It functions in the pathway metabolic intermediate biosynthesis; chorismate biosynthesis; chorismate from D-erythrose 4-phosphate and phosphoenolpyruvate: step 6/7. Its function is as follows. Catalyzes the transfer of the enolpyruvyl moiety of phosphoenolpyruvate (PEP) to the 5-hydroxyl of shikimate-3-phosphate (S3P) to produce enolpyruvyl shikimate-3-phosphate and inorganic phosphate. The protein is 3-phosphoshikimate 1-carboxyvinyltransferase of Campylobacter jejuni subsp. doylei (strain ATCC BAA-1458 / RM4099 / 269.97).